A 290-amino-acid chain; its full sequence is Lipid phosphate phosphatase 2 (290 aa).

3 helical membrane-spanning segments follow: residues 26 to 46 (WLIL…EPFH), 69 to 89 (WAVP…YYFI), and 93 to 113 (VYDL…TGVI). N-linked (GlcNAc...) asparagine glycosylation occurs at asparagine 142. The next 3 membrane-spanning stretches (helical) occupy residues 162-182 (SFPS…SLYL), 193-213 (GHVA…LVGV), and 226-246 (VFGG…QFFP).

Belongs to the PA-phosphatase related phosphoesterase family. Expressed in roots, stems, leaves, buds, flowers and siliques.

The protein resides in the membrane. With respect to regulation, PA phosphatase activity not inhibited by N-ethylmaleimide. In terms of biological role, may play a general 'housekeeping role' in lipid metabolism. Exhibits both diacylglycerol pyrophosphate (DGPP) phosphatase and phosphatidate (PA) phosphatase activities with no preference for either substrate. May play a role downstream of the ABA signaling pathway during seed germination and in stomatal movement in leaves. This chain is Lipid phosphate phosphatase 2 (LPP2), found in Arabidopsis thaliana (Mouse-ear cress).